A 220-amino-acid polypeptide reads, in one-letter code: Deoxyribose-phosphate aldolase (220 aa).

Asp-89 (proton donor/acceptor) is an active-site residue. Catalysis depends on Lys-151, which acts as the Schiff-base intermediate with acetaldehyde. The Proton donor/acceptor role is filled by Lys-180.

Belongs to the DeoC/FbaB aldolase family. DeoC type 1 subfamily.

The protein resides in the cytoplasm. The catalysed reaction is 2-deoxy-D-ribose 5-phosphate = D-glyceraldehyde 3-phosphate + acetaldehyde. It participates in carbohydrate degradation; 2-deoxy-D-ribose 1-phosphate degradation; D-glyceraldehyde 3-phosphate and acetaldehyde from 2-deoxy-alpha-D-ribose 1-phosphate: step 2/2. Its function is as follows. Catalyzes a reversible aldol reaction between acetaldehyde and D-glyceraldehyde 3-phosphate to generate 2-deoxy-D-ribose 5-phosphate. This chain is Deoxyribose-phosphate aldolase, found in Streptococcus pneumoniae (strain Taiwan19F-14).